A 300-amino-acid chain; its full sequence is Protein TRACHEARY ELEMENT DIFFERENTIATION-RELATED 7A (300 aa).

The segment at 1-181 (MASPLSQSVF…HIIPPPPPSP (181 aa)) is disordered. Topologically, residues 1–187 (MASPLSQSVF…PPSPSNHSTT (187 aa)) are extracellular. A compositionally biased stretch (pro residues) spans 12-181 (HFPPPSPAAT…HIIPPPPPSP (170 aa)). The N-linked (GlcNAc...) asparagine glycan is linked to asparagine 183. Residues 188 to 208 (IVVIFVSCGGVFFLAFAMAAL) form a helical membrane-spanning segment. Over 209–300 (WCFLKKKKKK…SSFGHHYLHG (92 aa)) the chain is Cytoplasmic.

Accumulates in cells differentiating into tracheary element (TE) which undergo secondary cell wall (SCW) formation.

It is found in the cell membrane. The protein localises to the secreted. The protein resides in the cell wall. In terms of biological role, involved in the secondary cell wall (SCW) formation of vessel elements (e.g. protoxylem and metaxylem), thus promoting tracheary element (TE) differentiation. This is Protein TRACHEARY ELEMENT DIFFERENTIATION-RELATED 7A from Zinnia elegans (Garden zinnia).